A 256-amino-acid chain; its full sequence is Ubiquinone/menaquinone biosynthesis C-methyltransferase UbiE (256 aa).

Over residues 1-19 the composition is skewed to polar residues; it reads MQNRSSSPDSSSAGNTHFG. The tract at residues 1 to 24 is disordered; the sequence is MQNRSSSPDSSSAGNTHFGFQSVP. S-adenosyl-L-methionine contacts are provided by residues Thr-81, Asp-102, and 128–129; that span reads DA.

This sequence belongs to the class I-like SAM-binding methyltransferase superfamily. MenG/UbiE family.

The catalysed reaction is a 2-demethylmenaquinol + S-adenosyl-L-methionine = a menaquinol + S-adenosyl-L-homocysteine + H(+). It catalyses the reaction a 2-methoxy-6-(all-trans-polyprenyl)benzene-1,4-diol + S-adenosyl-L-methionine = a 5-methoxy-2-methyl-3-(all-trans-polyprenyl)benzene-1,4-diol + S-adenosyl-L-homocysteine + H(+). It participates in quinol/quinone metabolism; menaquinone biosynthesis; menaquinol from 1,4-dihydroxy-2-naphthoate: step 2/2. It functions in the pathway cofactor biosynthesis; ubiquinone biosynthesis. Methyltransferase required for the conversion of demethylmenaquinol (DMKH2) to menaquinol (MKH2) and the conversion of 2-polyprenyl-6-methoxy-1,4-benzoquinol (DDMQH2) to 2-polyprenyl-3-methyl-6-methoxy-1,4-benzoquinol (DMQH2). This chain is Ubiquinone/menaquinone biosynthesis C-methyltransferase UbiE, found in Bordetella avium (strain 197N).